The chain runs to 1017 residues: Centriole and centriolar satellite protein OFD1 (1017 aa).

A LisH domain is found at 69 to 101; the sequence is LIGASNSLVADHLQRCGYEYSLSVFFPESGLAK. 2 coiled-coil regions span residues 188–557 and 626–659; these read PHRS…ENEV and EFIASSTKAKVRELEQEAERLEKAFRTYYQRATQ. Residues 609–666 are mediates homooligomerization; it reads PPYVNTATEASSPESDFEFIASSTKAKVRELEQEAERLEKAFRTYYQRATQNPSTSPQ. Disordered stretches follow at residues 657-676, 685-705, 721-749, and 769-801; these read ATQNPSTSPQPAKSPPSVNS, SSSMDRPVSAEDRVVSEQPLG, GSVVSRPRRTSSSTRLSSTPHPKSRRSLD, and LDRVSASPAASPSPCPERTAQASPVPSRHSFSG. A phosphoserine mark is found at Ser-664, Ser-670, Ser-687, Ser-722, Ser-737, Ser-747, Ser-791, and Ser-823. Low complexity predominate over residues 722-740; the sequence is SVVSRPRRTSSSTRLSSTP. Residues 895 to 966 are a coiled coil; it reads ELHMKERRQR…AHCENTLEKY (72 aa). Positions 897-988 are enriched in basic and acidic residues; sequence HMKERRQREE…ADKSSKKSGK (92 aa). The segment at 897 to 1017 is disordered; it reads HMKERRQREE…FSHEEPDDMW (121 aa).

It belongs to the OFD1 family. Homooligomer. Interacts with LCA5. Interacts with RUVBL1; the interaction is direct and may mediate interaction with the NuA4 histone acetyltransferase complex. Interacts with SDCCAG8; the interaction is direct. Interacts with MAP1LC3B. Interacts with C2CD3; OFD1 may act as a negative regulator of C2CD3. Forms a complex with KIAA0753/OFIP and CEP20/FOR20; the interaction with CEP20 is detected only in the presence of KIAA0753. Interacts with PCM1; this interaction may be mediated by KIAA0753/OFIP. Interacts with TBC1D31; regulates OFD1 activity in cilium assembly. Post-translationally, phosphorylated. Phosphorylation at Ser-737, by the cAMP-dependent protein kinase PKA, triggers ubiquitination and proteasomal degradation of OFD1. Also increases its interaction with TBC1D31 and regulates its function in ciliogenesis. In terms of processing, ubiquitinated by PJA2, upon phosphorylation at Ser-737 by PKA, leads to the proteasomal degradation of OFD1.

The protein localises to the cytoplasm. It is found in the cytoskeleton. The protein resides in the microtubule organizing center. It localises to the centrosome. Its subcellular location is the centriole. The protein localises to the centriolar satellite. It is found in the cilium basal body. The protein resides in the nucleus. Functionally, component of the centrioles controlling mother and daughter centrioles length. Recruits to the centriole IFT88 and centriole distal appendage-specific proteins including CEP164. Involved in the biogenesis of the cilium, a centriole-associated function. The cilium is a cell surface projection found in many vertebrate cells required to transduce signals important for development and tissue homeostasis. Plays an important role in development by regulating Wnt signaling and the specification of the left-right axis. Only OFD1 localized at the centriolar satellites is removed by autophagy, which is an important step in the ciliogenesis regulation. In Mus musculus (Mouse), this protein is Centriole and centriolar satellite protein OFD1 (Ofd1).